Reading from the N-terminus, the 92-residue chain is Small ribosomal subunit protein bS20 (92 aa).

Residues 1 to 22 form a disordered region; the sequence is MANSPQSKKRARQAEARAAVNK.

This sequence belongs to the bacterial ribosomal protein bS20 family.

Its function is as follows. Binds directly to 16S ribosomal RNA. The protein is Small ribosomal subunit protein bS20 of Cereibacter sphaeroides (strain ATCC 17029 / ATH 2.4.9) (Rhodobacter sphaeroides).